The sequence spans 412 residues: Histidinol dehydrogenase (412 aa).

NAD(+) contacts are provided by Tyr-118, Gln-176, and Asn-199. Thr-222, Gln-244, and His-247 together coordinate substrate. Residues Gln-244 and His-247 each contribute to the Zn(2+) site. Residues Glu-311 and His-312 each act as proton acceptor in the active site. Residues His-312, Asp-345, Glu-399, and His-404 each contribute to the substrate site. Asp-345 serves as a coordination point for Zn(2+). His-404 contacts Zn(2+).

Belongs to the histidinol dehydrogenase family. The cofactor is Zn(2+).

The catalysed reaction is L-histidinol + 2 NAD(+) + H2O = L-histidine + 2 NADH + 3 H(+). The protein operates within amino-acid biosynthesis; L-histidine biosynthesis; L-histidine from 5-phospho-alpha-D-ribose 1-diphosphate: step 9/9. Its function is as follows. Catalyzes the sequential NAD-dependent oxidations of L-histidinol to L-histidinaldehyde and then to L-histidine. The protein is Histidinol dehydrogenase of Thermus thermophilus (strain ATCC BAA-163 / DSM 7039 / HB27).